Reading from the N-terminus, the 561-residue chain is MLPALRLMTCALLTFFTTLSHASQCPDWSHARASSEITALQQQIASWDDSYHRQGLSQIPDELYDQSRQKLNDWRSCFAVSTPQANPLKTATGPLAHPVPHTGVNKLADEKDVKAWLKGRTDLWIQPKVDGVAVTLVYDEGRLVQAISRGDGTQGQDWTPQARLIKAIPQQLPQPDSLILQGELYWRLTDHVQAASGSVNARSKVAGMLARQTISPQQADAIGLFVWDWPDGPADMAQRLAGLQAMGFNHSVAYTHPLENHAQAADWREHWYRNPLPFATDGVIMRQGQRPPAQRWQASAPYWIAAWKHPYAQALAEVRKVHFNIGRTGKIAPVLELTPVRLDDRTVSRISAGSLSRWEKLDIRPGDHIAVSLAGLTIPRLDGVVSRAAERAEMSVPHASDYHESSCWQAAPGCESQFRARLVWLSGKKGLALPGVGPGTWDKLIESGHISGLLDWMTLNHAELANIPGLAERSSDKLLDSLQTARERPFQTWLKAIGLPPAGNAKLPDNWHDLAERSVEQWQAEPGIGPGRAAKLRAFFQDPHVQALSQQLQAQGISGFK.

The active-site N6-AMP-lysine intermediate is the Lys-128.

It belongs to the NAD-dependent DNA ligase family. LigB subfamily.

The enzyme catalyses NAD(+) + (deoxyribonucleotide)n-3'-hydroxyl + 5'-phospho-(deoxyribonucleotide)m = (deoxyribonucleotide)n+m + AMP + beta-nicotinamide D-nucleotide.. In terms of biological role, catalyzes the formation of phosphodiester linkages between 5'-phosphoryl and 3'-hydroxyl groups in double-stranded DNA using NAD as a coenzyme and as the energy source for the reaction. The sequence is that of DNA ligase B from Pseudomonas syringae pv. tomato (strain ATCC BAA-871 / DC3000).